A 1719-amino-acid polypeptide reads, in one-letter code: Chromodomain-helicase-DNA-binding protein 1 (1719 aa).

The span at 1 to 10 (MNGHSDEESV) shows a compositional bias: basic and acidic residues. A disordered region spans residues 1-249 (MNGHSDEESV…EAEETKTDSD (249 aa)). The segment covering 34–62 (SSGSSSDGSSSQSGSSDSESGSESGSQSE) has biased composition (low complexity). Residues 66–85 (DTSREKKQVQAKPPKADGSE) are compositionally biased toward basic and acidic residues. Low complexity predominate over residues 103–116 (KKQQQQQKAASSDS). The span at 117-133 (GSEEDSSSSEDSADDSS) shows a compositional bias: acidic residues. Residues 149-160 (SGSGSVSGTGSD) show a composition bias toward low complexity. A compositionally biased stretch (acidic residues) spans 161-178 (SESEEDGDKSSCEESESD). Residues 184–207 (KVKSRKPPSRIKPKSGKKSTGQKK) are compositionally biased toward basic residues. Residues 212–222 (SSEEEEDDDED) are compositionally biased toward acidic residues. A compositionally biased stretch (basic and acidic residues) spans 239 to 248 (KEAEETKTDS). Chromo domains are found at residues 268-360 (ETIE…RWLK) and 385-448 (QIVE…TPFK). The 171-residue stretch at 489–659 (AHSWCKGNSC…WSLLHFIMPE (171 aa)) folds into the Helicase ATP-binding domain. 502–509 (DEMGLGKT) provides a ligand contact to ATP. Residues 610 to 613 (DEAH) carry the DEAH box motif. Residues 788 to 939 (LLDKLLIRLR…HLVIQRMDTT (152 aa)) enclose the Helicase C-terminal domain. Disordered stretches follow at residues 1076-1116 (ISFN…TIPR), 1319-1393 (QRLA…TPVH), and 1503-1719 (KKRQ…SRKT). Composition is skewed to basic residues over residues 1103–1113 (KRPKKRGRPRT) and 1327–1342 (SKRR…MKAS). Positions 1369 to 1380 (NKVNEIKSENKE) are enriched in basic and acidic residues. Residues 1410–1512 (LDQKTFSVCK…KKRQESQQHN (103 aa)) form a CHD1 helical C-terminal domain (CHCT) region. Residues 1511 to 1524 (HNDQNISSNVNTHV) show a composition bias toward polar residues. Composition is skewed to basic and acidic residues over residues 1526–1576 (RNPD…DSRK), 1585–1673 (GKDH…DHRA), and 1698–1710 (SPFE…KSTP).

The protein belongs to the SNF2/RAD54 helicase family. As to quaternary structure, component of the SAGA complex. Interacts with SSRP1.

The protein localises to the nucleus. The protein resides in the chromosome. It is found in the centromere. It catalyses the reaction ATP + H2O = ADP + phosphate + H(+). In terms of biological role, ATP-dependent chromatin-remodeling factor which functions as substrate recognition component of the transcription regulatory histone acetylation (HAT) complex SAGA. Regulates polymerase II transcription. Also required for efficient transcription by RNA polymerase I, and more specifically the polymerase I transcription termination step. Regulates negatively DNA replication. Not only involved in transcription-related chromatin remodeling, but also required to maintain a specific chromatin configuration across the genome. Required for maintaining open chromatin and pluripotency in embryonic stem cells. Required for centromeric localization of CENPA. The sequence is that of Chromodomain-helicase-DNA-binding protein 1 (CHD1) from Gallus gallus (Chicken).